We begin with the raw amino-acid sequence, 135 residues long: Galectin-1 (135 aa).

Position 2 is an N-acetylalanine (A2). The Galectin domain occupies 4-135; that stretch reads GLVASNLNLK…DFKIKCVAFE (132 aa). 2 positions are modified to N6-acetyllysine: K13 and K29. S30 is subject to Phosphoserine. Residues 45 to 49, H53, N62, and 69 to 72 each bind a beta-D-galactoside; these read HFNPR and WGAE. K108 carries the N6-acetyllysine; alternate modification. K108 carries the post-translational modification N6-succinyllysine; alternate. Position 128 is an N6-acetyllysine (K128).

Homodimer. Binds LGALS3BP. Interacts with CD2, CD3, CD4, CD6, CD7, CD43, ALCAM and CD45. Interacts with laminin (via poly-N-acetyllactosamine). Interacts with SUSD2. Interacts with cargo receptor TMED10; the interaction mediates the translocation from the cytoplasm into the ERGIC (endoplasmic reticulum-Golgi intermediate compartment) and thereby secretion.

The protein localises to the secreted. It is found in the extracellular space. Its subcellular location is the extracellular matrix. The protein resides in the cytoplasm. Functionally, lectin that binds beta-galactoside and a wide array of complex carbohydrates. Plays a role in regulating apoptosis, cell proliferation and cell differentiation. Inhibits CD45 protein phosphatase activity and therefore the dephosphorylation of Lyn kinase. Strong inducer of T-cell apoptosis. The protein is Galectin-1 (LGALS1) of Bos taurus (Bovine).